A 521-amino-acid polypeptide reads, in one-letter code: Cytochrome P450 1A1 (521 aa).

F229 contacts substrate. C463 provides a ligand contact to heme.

The protein belongs to the cytochrome P450 family. Heme serves as cofactor.

The protein resides in the endoplasmic reticulum membrane. It is found in the microsome membrane. It catalyses the reaction an organic molecule + reduced [NADPH--hemoprotein reductase] + O2 = an alcohol + oxidized [NADPH--hemoprotein reductase] + H2O + H(+). Cytochromes P450 are a group of heme-thiolate monooxygenases. They oxidize a variety of structurally unrelated compounds, including steroids, fatty acids, and xenobiotics. This is Cytochrome P450 1A1 (cyp1a1) from Opsanus tau (Oyster toadfish).